We begin with the raw amino-acid sequence, 213 residues long: MQAYQRDFIRFAIDRGVLRFGEFTLKSGRTSPYFFNAGLFNTGSALAQLGRFYAAAVVESGIAFDVLFGPAYKGIPLASATAVALAEHHDRDLPWCFNRKEAKAHGEGGSLVGSPLAGNVLIIDDVITAGTAIREVMQIIKDQSATAAGVLIALNRQERGNGELSAIQEVERDFGIPVVSIVSLNQVLEFLADDPQLKQHLPAVEAYRMQYGI.

Lys26 contributes to the 5-phospho-alpha-D-ribose 1-diphosphate binding site. 34–35 (FF) lines the orotate pocket. 5-phospho-alpha-D-ribose 1-diphosphate-binding positions include 72–73 (YK), Arg99, Lys100, Lys103, His105, and 124–132 (DDVITAGTA). Residues Thr128 and Arg156 each coordinate orotate.

The protein belongs to the purine/pyrimidine phosphoribosyltransferase family. PyrE subfamily. In terms of assembly, homodimer. Mg(2+) is required as a cofactor.

It carries out the reaction orotidine 5'-phosphate + diphosphate = orotate + 5-phospho-alpha-D-ribose 1-diphosphate. It participates in pyrimidine metabolism; UMP biosynthesis via de novo pathway; UMP from orotate: step 1/2. In terms of biological role, catalyzes the transfer of a ribosyl phosphate group from 5-phosphoribose 1-diphosphate to orotate, leading to the formation of orotidine monophosphate (OMP). In Pseudomonas savastanoi pv. phaseolicola (strain 1448A / Race 6) (Pseudomonas syringae pv. phaseolicola (strain 1448A / Race 6)), this protein is Orotate phosphoribosyltransferase.